The sequence spans 185 residues: Capsid protein (185 aa).

The segment at 136–185 (NAPILSTLPETTVVRRRDRGRSPRRRTPSPRRRRSQSPRRRRSQSRESQC) is disordered. Residues 149–178 (VRRRDRGRSPRRRTPSPRRRRSQSPRRRRS) show a composition bias toward basic residues. Serine 157, serine 164, and serine 172 each carry phosphoserine; by host. The stretch at 157–163 (SPRRRTP) is one 1; half-length repeat. Positions 157-179 (SPRRRTPSPRRRRSQSPRRRRSQ) are 3 X 8 AA repeats of S-P-R-R-R-[PR]-S-Q. The Bipartite nuclear localization signal signature appears at 160-177 (RRTPSPRRRRSQSPRRRR). 2 consecutive repeat copies span residues 164–171 (SPRRRRSQ) and 172–179 (SPRRRRSQ). Residues 179 to 185 (QSRESQC) form an RNA binding region.

The protein belongs to the orthohepadnavirus core antigen family. In terms of assembly, homodimerizes, then multimerizes. Interacts with cytosol exposed regions of viral L glycoprotein present in the reticulum-to-Golgi compartment. Interacts with human FLNB. Phosphorylated form interacts with host importin alpha; this interaction depends on the exposure of the NLS, which itself depends upon genome maturation and/or phosphorylation of the capsid protein. Interacts with host NUP153. Post-translationally, phosphorylated by host SRPK1, SRPK2, and maybe protein kinase C or GAPDH. Phosphorylation is critical for pregenomic RNA packaging. Protein kinase C phosphorylation is stimulated by HBx protein and may play a role in transport of the viral genome to the nucleus at the late step during the viral replication cycle.

It is found in the virion. Its subcellular location is the host cytoplasm. In terms of biological role, self assembles to form an icosahedral capsid. Most capsids appear to be large particles with an icosahedral symmetry of T=4 and consist of 240 copies of capsid protein, though a fraction forms smaller T=3 particles consisting of 180 capsid proteins. Entering capsids are transported along microtubules to the nucleus. Phosphorylation of the capsid is thought to induce exposure of nuclear localization signal in the C-terminal portion of the capsid protein that allows binding to the nuclear pore complex via the importin (karyopherin-) alpha and beta. Capsids are imported in intact form through the nuclear pore into the nuclear basket, where it probably binds NUP153. Only capsids that contain the mature viral genome can release the viral DNA and capsid protein into the nucleoplasm. Immature capsids get stuck in the basket. Capsids encapsulate the pre-genomic RNA and the P protein. Pre-genomic RNA is reverse-transcribed into DNA while the capsid is still in the cytoplasm. The capsid can then either be directed to the nucleus, providing more genomes for transcription, or bud through the endoplasmic reticulum to provide new virions. The protein is Capsid protein of Homo sapiens (Human).